We begin with the raw amino-acid sequence, 201 residues long: CASP-like protein 1F2 (201 aa).

Residues 1–29 (MITSIATTTAGAFEVKSLGFIPYPSQPKR) are Cytoplasmic-facing. The chain crosses the membrane as a helical span at residues 30–50 (IFFMAQVIFRILAIAFAVASI). The Extracellular segment spans residues 51 to 78 (SAMVTSDQNVIVFGMDTAARYSYSSAFR). A helical membrane pass occupies residues 79–99 (FLVGANAVVCGFSVLSLIFVC). Topologically, residues 100-119 (LMSRRSEAILEKNYYLFLHD) are cytoplasmic. A helical membrane pass occupies residues 120-140 (MVMMVMMVSGCSAATAIGYVG). Over 141–162 (RYGEKEITWTAVCDFVGKFCNQ) the chain is Extracellular. The chain crosses the membrane as a helical span at residues 163 to 183 (ALVSIVLAYLALFCYVALTTL). The Cytoplasmic portion of the chain corresponds to 184–201 (AAHKLNHSSSTAAIRQNE).

The protein belongs to the Casparian strip membrane proteins (CASP) family. Homodimer and heterodimers.

Its subcellular location is the cell membrane. The sequence is that of CASP-like protein 1F2 from Ricinus communis (Castor bean).